Reading from the N-terminus, the 753-residue chain is Protein transport protein SEC23-1 (753 aa).

Positions 56, 61, 80, and 83 each coordinate Zn(2+).

This sequence belongs to the SEC23/SEC24 family. SEC23 subfamily. In terms of assembly, the COPII coat is composed of at least 5 proteins: the SEC23/24 complex, the SEC13/31 complex, and the protein SAR1.

The protein localises to the cytoplasm. It localises to the cytoplasmic vesicle. It is found in the COPII-coated vesicle membrane. The protein resides in the endoplasmic reticulum membrane. Its subcellular location is the golgi apparatus membrane. Functionally, component of the coat protein complex II (COPII) which promotes the formation of transport vesicles from the endoplasmic reticulum (ER). The coat has two main functions, the physical deformation of the endoplasmic reticulum membrane into vesicles and the selection of cargo molecules. The protein is Protein transport protein SEC23-1 (SEC231) of Candida glabrata (strain ATCC 2001 / BCRC 20586 / JCM 3761 / NBRC 0622 / NRRL Y-65 / CBS 138) (Yeast).